A 264-amino-acid polypeptide reads, in one-letter code: Undecaprenyl-diphosphatase (264 aa).

Transmembrane regions (helical) follow at residues isoleucine 7–serine 27, threonine 45–tyrosine 65, isoleucine 86–isoleucine 106, leucine 109–alanine 129, isoleucine 145–phenylalanine 165, valine 186–isoleucine 206, leucine 215–isoleucine 235, and lysine 244–isoleucine 264.

The protein belongs to the UppP family.

Its subcellular location is the cell membrane. It catalyses the reaction di-trans,octa-cis-undecaprenyl diphosphate + H2O = di-trans,octa-cis-undecaprenyl phosphate + phosphate + H(+). In terms of biological role, catalyzes the dephosphorylation of undecaprenyl diphosphate (UPP). Confers resistance to bacitracin. This is Undecaprenyl-diphosphatase from Buchnera aphidicola subsp. Schizaphis graminum (strain Sg).